Consider the following 367-residue polypeptide: Aminomethyltransferase (367 aa).

This sequence belongs to the GcvT family. The glycine cleavage system is composed of four proteins: P, T, L and H.

The catalysed reaction is N(6)-[(R)-S(8)-aminomethyldihydrolipoyl]-L-lysyl-[protein] + (6S)-5,6,7,8-tetrahydrofolate = N(6)-[(R)-dihydrolipoyl]-L-lysyl-[protein] + (6R)-5,10-methylene-5,6,7,8-tetrahydrofolate + NH4(+). In terms of biological role, the glycine cleavage system catalyzes the degradation of glycine. The polypeptide is Aminomethyltransferase (Mycolicibacterium paratuberculosis (strain ATCC BAA-968 / K-10) (Mycobacterium paratuberculosis)).